We begin with the raw amino-acid sequence, 255 residues long: Proteasome subunit alpha (255 aa).

Residues 228–255 form a disordered region; sequence LLASPAGTSGPTGEPGPAGTAATDGGDL. The segment covering 232-255 has biased composition (low complexity); that stretch reads PAGTSGPTGEPGPAGTAATDGGDL.

It belongs to the peptidase T1A family. The 20S proteasome core is composed of 14 alpha and 14 beta subunits that assemble into four stacked heptameric rings, resulting in a barrel-shaped structure. The two inner rings, each composed of seven catalytic beta subunits, are sandwiched by two outer rings, each composed of seven alpha subunits. The catalytic chamber with the active sites is on the inside of the barrel. Has a gated structure, the ends of the cylinder being occluded by the N-termini of the alpha-subunits. Is capped by the proteasome-associated ATPase, ARC.

It localises to the cytoplasm. Its pathway is protein degradation; proteasomal Pup-dependent pathway. With respect to regulation, the formation of the proteasomal ATPase ARC-20S proteasome complex, likely via the docking of the C-termini of ARC into the intersubunit pockets in the alpha-rings, may trigger opening of the gate for substrate entry. Interconversion between the open-gate and close-gate conformations leads to a dynamic regulation of the 20S proteasome proteolysis activity. In terms of biological role, component of the proteasome core, a large protease complex with broad specificity involved in protein degradation. The chain is Proteasome subunit alpha from Sanguibacter keddieii (strain ATCC 51767 / DSM 10542 / NCFB 3025 / ST-74).